The primary structure comprises 258 residues: 6-phosphogluconolactonase (258 aa).

At Ala-2 the chain carries N-acetylalanine. Residue Ser-49 is modified to Phosphoserine. At Lys-180 the chain carries N6-acetyllysine.

This sequence belongs to the glucosamine/galactosamine-6-phosphate isomerase family. 6-phosphogluconolactonase subfamily.

It localises to the cytoplasm. The catalysed reaction is 6-phospho-D-glucono-1,5-lactone + H2O = 6-phospho-D-gluconate + H(+). Its pathway is carbohydrate degradation; pentose phosphate pathway; D-ribulose 5-phosphate from D-glucose 6-phosphate (oxidative stage): step 2/3. Its function is as follows. Hydrolysis of 6-phosphogluconolactone to 6-phosphogluconate. The polypeptide is 6-phosphogluconolactonase (Homo sapiens (Human)).